We begin with the raw amino-acid sequence, 434 residues long: Chaperone SurA (434 aa).

A signal peptide spans 1–22; that stretch reads MKPSKHLIFALFALAISQPTMA. PpiC domains follow at residues 173–274 and 283–383; these read DVEY…KIMD and IEEV…QLEE.

The protein resides in the periplasm. It carries out the reaction [protein]-peptidylproline (omega=180) = [protein]-peptidylproline (omega=0). Functionally, chaperone involved in the correct folding and assembly of outer membrane proteins. Recognizes specific patterns of aromatic residues and the orientation of their side chains, which are found more frequently in integral outer membrane proteins. May act in both early periplasmic and late outer membrane-associated steps of protein maturation. The polypeptide is Chaperone SurA (Shewanella oneidensis (strain ATCC 700550 / JCM 31522 / CIP 106686 / LMG 19005 / NCIMB 14063 / MR-1)).